The following is a 330-amino-acid chain: Tryptophan--tRNA ligase (330 aa).

Residues 10 to 12 and 18 to 19 each bind ATP; these read QPS and GN. Residues 11-19 carry the 'HIGH' region motif; that stretch reads PSGSVTLGN. Position 133 (Asp-133) interacts with L-tryptophan. ATP-binding positions include 145-147, Ile-184, and 193-197; these read GED and KMSKS. The short motif at 193–197 is the 'KMSKS' region element; the sequence is KMSKS.

This sequence belongs to the class-I aminoacyl-tRNA synthetase family. As to quaternary structure, homodimer.

The protein localises to the cytoplasm. It carries out the reaction tRNA(Trp) + L-tryptophan + ATP = L-tryptophyl-tRNA(Trp) + AMP + diphosphate + H(+). Catalyzes the attachment of tryptophan to tRNA(Trp). The protein is Tryptophan--tRNA ligase of Bacillus subtilis (strain 168).